Reading from the N-terminus, the 143-residue chain is Putative pre-16S rRNA nuclease (143 aa).

Belongs to the YqgF nuclease family.

The protein resides in the cytoplasm. Functionally, could be a nuclease involved in processing of the 5'-end of pre-16S rRNA. This Salinibacter ruber (strain DSM 13855 / M31) protein is Putative pre-16S rRNA nuclease.